The primary structure comprises 456 residues: MTIESILSAIDSFIWGAPLLILLSGTGLYLTLRLGFIQIRYLPRALGYLFKKDKGGKGDVSSFAALCTALAATIGTGNIVGVATAVQAGGPGAIFWMWLVALLGMATKYAECLLAVKYRVRDKNGFMAGGPMYYIERGLGIRWLAKLFALFGVMVAFFGIGTFPQVNAITHAMQDTFNIPVLVTAIIVTLLVGLIILGGVKRIATASSVIVPFMAILYVTTSLVIILLNIEKVPDAILLIIDSAFDPQAALGGAVGLTVMKAIQSGVARGIFSNESGLGSAPIAAAAAQTREPVRQGLISMTGTFLDTIIVCTMTGIVLVLTGAWNNPELAGATVTNYAFAQGLGTSIGATIVTVGLLFFAFTTILGWCYYGERCFVYLVGIRGVKLYRLAYIMLVGLGAFLHLNLIWIIADIVNGLMAFPNLIALIGLRKVIIEETKDYFQRLKINHYDQDEVIK.

Helical transmembrane passes span 12–32 (SFIW…YLTL), 63–83 (FAAL…VGVA), 86–106 (VQAG…LGMA), 143–163 (WLAK…IGTF), 179–199 (IPVL…ILGG), 208–228 (SVIV…IILL), 237–257 (ILLI…AVGL), 305–325 (FLDT…TGAW), 348–368 (IGAT…ILGW), 390–410 (LAYI…IWII), and 414–434 (VNGL…KVII).

Belongs to the alanine or glycine:cation symporter (AGCS) (TC 2.A.25) family.

It localises to the cell inner membrane. This is an uncharacterized protein from Haemophilus influenzae (strain ATCC 51907 / DSM 11121 / KW20 / Rd).